A 59-amino-acid chain; its full sequence is Large ribosomal subunit protein uL30 (59 aa).

Belongs to the universal ribosomal protein uL30 family. In terms of assembly, part of the 50S ribosomal subunit.

This is Large ribosomal subunit protein uL30 from Edwardsiella ictaluri (strain 93-146).